Here is a 997-residue protein sequence, read N- to C-terminus: MKDSGDSKDQQLMVALRVRPISVAELEEGATLIAHKMDEQMVVLMDPMEDPDDILRAHRSREKSYLFDVAFDFTATQEMVYQATTKSLIEGVISGYNATVFAYGPTGCGKTYTMLGTDHEPGIYVRTLNDLFRAIEETSNDMEYEVSMSYLEIYNEMIRDLLNPALGYLELREDSKGVIQVAGITEVSTINAKEIMQLLMKGNRQRTQEPTAANQTSSRSHAVLQVAVRQRSRVKNILQEVRQGRLFMIDLAGSERASQTQNRGQRMKEGAHINRSLLALGNCINALSDKGSNKYINYRDSKLTRLLKDSLGGNSRTVMIAHISPASTAFEESRNTLTYAGRAKNIRTRVKQNLLNVSYHIAQYTSIIADLRGEIQRLKCKIDQQAGRGQARGKLDRGDIRHIQAEVQLHSGQEGPAEMGQLREQLISAFHEQMDVRRRLLELENQAMEVQIDTSRHLLTIAGWEHEKSRRALKWREERRKESYTKEDSEKDSDTGDEPDNLEPPEVASARENIAALVGEQKKLRKEKLALEQRCRELRARGRRLEETLPRRIGSEEQREVLSLLCRVHELEVENTEMQSHALLRDSALRHRREAVRRLEQHRSLCDEIIQGQRQIIDDYNLEVPRHLEELYEVYLRELEEGSLERATIMDRVASRALQDSSLPKITPAGATLTPDSDLESVKTLSSEAQRPQNNTLPPLGTDSESYHVFKASPRAWQVKSSSVPTPPPIQVGSLVTQEAPPQDSLGSQINSSPESSENLSEILLSHKERKEILTRTKCISVKAAQRRSRALGTEGRHLLAPATERSSLSLHSLSEADDARPPGQLACKRPPSPTLQHAISEDNLSSSTGEGPSRAVGPRGDGTGSWVRGQKKCLSKKREESLEAKRRKRRSRSFEVTGQGLSRPKTHLLGPRPSEGLSDRRMPACGRPSPGVRHLGKVSLPLAKVKFPPNQNTGSGNPSPLLVAPNQAGVSRRATRGPSLPHGSSTFGKDGRLQHN.

Positions 11–346 (QLMVALRVRP…LTYAGRAKNI (336 aa)) constitute a Kinesin motor domain. 104–111 (GPTGCGKT) serves as a coordination point for ATP. Positions 361–388 (IAQYTSIIADLRGEIQRLKCKIDQQAGR) form a coiled coil. Over residues 477–494 (EERRKESYTKEDSEKDSD) the composition is skewed to basic and acidic residues. 4 disordered regions span residues 477–509 (EERR…EVAS), 665–704 (KITP…GTDS), 718–759 (QVKS…SSEN), and 784–997 (AAQR…LQHN). Residues 506–551 (EVASARENIAALVGEQKKLRKEKLALEQRCRELRARGRRLEETLPR) adopt a coiled-coil conformation. A compositionally biased stretch (polar residues) spans 683 to 697 (KTLSSEAQRPQNNTL). Low complexity predominate over residues 750–759 (INSSPESSEN). Composition is skewed to polar residues over residues 835–851 (TLQH…STGE) and 950–959 (PNQNTGSGNP).

It belongs to the TRAFAC class myosin-kinesin ATPase superfamily. Kinesin family. Strongly expressed in the oviduct and trachea. Expressed in testis, lung, ovary and brain.

It is found in the cytoplasm. Its subcellular location is the cytoskeleton. It localises to the cell projection. The protein localises to the cilium. In terms of biological role, plus end-directed microtubule-dependent motor protein that regulates the length of motile cilia by mediating depolymerization of microtubules at ciliary tips. The polypeptide is Kinesin-like protein KIF19 (Kif19) (Mus musculus (Mouse)).